Here is a 199-residue protein sequence, read N- to C-terminus: Putative inactive ribonuclease 11 (199 aa).

The first 16 residues, 1–16, serve as a signal peptide directing secretion; it reads METFPLLLLSLGLVLA. A glycan (N-linked (GlcNAc...) asparagine) is linked at asparagine 61. The active-site Proton acceptor is histidine 82. Residues asparagine 89 and asparagine 111 are each glycosylated (N-linked (GlcNAc...) asparagine). 2 disulfide bridges follow: cysteine 98-cysteine 158 and cysteine 114-cysteine 169. Residue 115 to 119 coordinates substrate; that stretch reads KWSNN.

Belongs to the pancreatic ribonuclease family.

The protein localises to the secreted. This chain is Putative inactive ribonuclease 11 (RNASE11), found in Homo sapiens (Human).